The chain runs to 329 residues: Putative glucose ABC transporter permease protein TsgC13 (329 aa).

Transmembrane regions (helical) follow at residues 3 to 23 (FAAGLLNATVQAATVLLLAGL), 32 to 52 (GVLNLGVEGMMLVGALGGFVV), 60 to 80 (WLGFGVGIACGMALAAVHAFL), 89 to 109 (VISGVMLTLLGTGLTTFFGSG), 139 to 161 (AFFRSTATDYLALLAVPVVWFFL), 193 to 213 (LAVIIGGGFAGAAGAHLSLAF), and 216 to 236 (LWVPGMTVGRGWIAVALVVFA).

Belongs to the binding-protein-dependent transport system permease family. As to quaternary structure, the complex is composed of two ATP-binding proteins (TsgD13), two transmembrane proteins (TsgB13 and TsgC13) and a solute-binding protein (TsgA13).

Its subcellular location is the cell membrane. Part of an ABC transporter complex involved in glucose import (Potential). Responsible for the translocation of the substrate across the membrane. The protein is Putative glucose ABC transporter permease protein TsgC13 (tsgC13) of Haloferax volcanii (strain ATCC 29605 / DSM 3757 / JCM 8879 / NBRC 14742 / NCIMB 2012 / VKM B-1768 / DS2) (Halobacterium volcanii).